Reading from the N-terminus, the 415-residue chain is tRNA(Met) cytidine acetate ligase (415 aa).

ATP-binding positions include 7–20 (VVEY…HLYH), glycine 101, asparagine 162, and 187–188 (RI).

It belongs to the TmcAL family. As to quaternary structure, homodimer.

The protein resides in the cytoplasm. It carries out the reaction cytidine(34) in elongator tRNA(Met) + acetate + ATP = N(4)-acetylcytidine(34) in elongator tRNA(Met) + AMP + diphosphate. Catalyzes the formation of N(4)-acetylcytidine (ac(4)C) at the wobble position of elongator tRNA(Met), using acetate and ATP as substrates. First activates an acetate ion to form acetyladenylate (Ac-AMP) and then transfers the acetyl group to tRNA to form ac(4)C34. This Bacillus subtilis (strain 168) protein is tRNA(Met) cytidine acetate ligase.